Reading from the N-terminus, the 496-residue chain is Guanosine-5'-triphosphate,3'-diphosphate pyrophosphatase (496 aa).

It belongs to the GppA/Ppx family. GppA subfamily.

It catalyses the reaction guanosine 3'-diphosphate 5'-triphosphate + H2O = guanosine 3',5'-bis(diphosphate) + phosphate + H(+). It functions in the pathway purine metabolism; ppGpp biosynthesis; ppGpp from GTP: step 2/2. In terms of biological role, catalyzes the conversion of pppGpp to ppGpp. Guanosine pentaphosphate (pppGpp) is a cytoplasmic signaling molecule which together with ppGpp controls the 'stringent response', an adaptive process that allows bacteria to respond to amino acid starvation, resulting in the coordinated regulation of numerous cellular activities. In Aeromonas salmonicida (strain A449), this protein is Guanosine-5'-triphosphate,3'-diphosphate pyrophosphatase.